The sequence spans 1149 residues: cGMP-specific 3',5'-cyclic phosphodiesterase (1149 aa).

2 stretches are compositionally biased toward low complexity: residues 1 to 19 (MHGT…DVSS) and 31 to 47 (ATSS…ASSS). Positions 1–175 (MHGTVSRSSS…STTASQQDVD (175 aa)) are disordered. Over residues 48–59 (KPLTNGANKTAI) the composition is skewed to polar residues. Positions 60 to 85 (STAAGVTPGAAPGPGCAAIPASGSSG) are enriched in low complexity. The span at 96-108 (QSNNNRPAGSNRS) shows a compositional bias: polar residues. Positions 132 to 158 (SSSSPSQSPSQSQSQSQASIQTQTSQQ) are enriched in low complexity. GAF domains follow at residues 278–430 (DIDV…GIGI) and 462–643 (NLEC…GLGI). The region spanning 673 to 996 (SQDQTEKLTQ…RNWQDLAEKV (324 aa)) is the PDEase domain. Histidine 749 serves as the catalytic Proton donor. 4 residues coordinate a divalent metal cation: histidine 753, histidine 789, aspartate 790, and aspartate 900. 2 disordered regions span residues 1037-1066 (QQSQ…TGAL) and 1096-1149 (SHVS…CALL). Composition is skewed to basic and acidic residues over residues 1042–1053 (GSEDSHTPEHQR) and 1096–1106 (SHVSEDMDDKS). The span at 1115 to 1135 (ASGSMGRMSASSSTSSAGGQM) shows a compositional bias: low complexity. Residues 1139–1149 (SKKRSKLCALL) show a composition bias toward basic residues. Cysteine 1146 bears the Cysteine methyl ester mark. Cysteine 1146 is lipidated: S-farnesyl cysteine. The propeptide at 1147–1149 (ALL) is removed in mature form.

It belongs to the cyclic nucleotide phosphodiesterase family. Interacts with PrBP. A divalent metal cation is required as a cofactor.

The protein resides in the cell membrane. The catalysed reaction is 3',5'-cyclic GMP + H2O = GMP + H(+). In terms of biological role, has a role regulating cGMP transport in Malpighian tubule principal cells. In Drosophila yakuba (Fruit fly), this protein is cGMP-specific 3',5'-cyclic phosphodiesterase.